We begin with the raw amino-acid sequence, 250 residues long: tRNA (guanine-N(1)-)-methyltransferase (250 aa).

Residues glycine 114 and 134 to 139 (IGDYVL) contribute to the S-adenosyl-L-methionine site.

This sequence belongs to the RNA methyltransferase TrmD family. Homodimer.

It is found in the cytoplasm. The enzyme catalyses guanosine(37) in tRNA + S-adenosyl-L-methionine = N(1)-methylguanosine(37) in tRNA + S-adenosyl-L-homocysteine + H(+). Specifically methylates guanosine-37 in various tRNAs. In Moorella thermoacetica (strain ATCC 39073 / JCM 9320), this protein is tRNA (guanine-N(1)-)-methyltransferase.